The chain runs to 961 residues: Roundabout homolog 4 (961 aa).

Residues 1–37 (MGQGEELRAAVDSGGMGLLGTKCPLPLLLLFIMGGKA) form the signal peptide. 2 Ig-like C2-type domains span residues 42 to 142 (PQIL…ARLS) and 148 to 235 (EDFR…ARVS). 2 disulfide bridges follow: cysteine 63–cysteine 125 and cysteine 169–cysteine 218. N-linked (GlcNAc...) asparagine glycosylation is found at asparagine 211 and asparagine 257. Fibronectin type-III domains are found at residues 259 to 356 (TLLN…LPEQ) and 358 to 453 (PSAP…LEQA). N-linked (GlcNAc...) asparagine glycosylation is found at asparagine 371, asparagine 400, and asparagine 407. A compositionally biased stretch (low complexity) spans 544–559 (SGSRDLSSSSSLSSRL). 2 disordered regions span residues 544-563 (SGSR…GVDP) and 600-634 (QTSS…SSDS). Polar residues predominate over residues 623-634 (TGTSSPWASSDS). Asparagine 691 and asparagine 723 each carry an N-linked (GlcNAc...) asparagine glycan. Positions 726–810 (ELAARPLPPT…SLEEEDQDSV (85 aa)) are disordered. A compositionally biased stretch (low complexity) spans 755 to 769 (LQAPSSDPLPAAPLS). Residues 770-783 (VLNSSRPSSPQASF) are compositionally biased toward polar residues. 2 N-linked (GlcNAc...) asparagine glycosylation sites follow: asparagine 772 and asparagine 793. A compositionally biased stretch (low complexity) spans 784–801 (LSVPSPGSSNLSSSSLSS). A Phosphoserine modification is found at serine 823.

Belongs to the immunoglobulin superfamily. ROBO family. In terms of assembly, interacts with SLIT2 and ENAH.

Functionally, receptor for Slit proteins, at least for SLIT2, and seems to be involved in angiogenesis and vascular patterning. May mediate the inhibition of primary endothelial cell migration by Slit proteins. Involved in the maintenance of endothelial barrier organization and function. The polypeptide is Roundabout homolog 4 (Robo4) (Rattus norvegicus (Rat)).